The following is a 236-amino-acid chain: 2-C-methyl-D-erythritol 4-phosphate cytidylyltransferase (236 aa).

The protein belongs to the IspD/TarI cytidylyltransferase family. IspD subfamily.

It catalyses the reaction 2-C-methyl-D-erythritol 4-phosphate + CTP + H(+) = 4-CDP-2-C-methyl-D-erythritol + diphosphate. It functions in the pathway isoprenoid biosynthesis; isopentenyl diphosphate biosynthesis via DXP pathway; isopentenyl diphosphate from 1-deoxy-D-xylulose 5-phosphate: step 2/6. In terms of biological role, catalyzes the formation of 4-diphosphocytidyl-2-C-methyl-D-erythritol from CTP and 2-C-methyl-D-erythritol 4-phosphate (MEP). In Burkholderia multivorans (strain ATCC 17616 / 249), this protein is 2-C-methyl-D-erythritol 4-phosphate cytidylyltransferase.